Consider the following 407-residue polypeptide: Imidazolonepropionase (407 aa).

Fe(3+) is bound by residues H74 and H76. The Zn(2+) site is built by H74 and H76. 4-imidazolone-5-propanoate contacts are provided by R83, Y146, and H179. Y146 contributes to the N-formimidoyl-L-glutamate binding site. Residue H244 participates in Fe(3+) binding. H244 contributes to the Zn(2+) binding site. Q247 contacts 4-imidazolone-5-propanoate. Residue D319 coordinates Fe(3+). Position 319 (D319) interacts with Zn(2+). N-formimidoyl-L-glutamate contacts are provided by N321 and G323. T324 provides a ligand contact to 4-imidazolone-5-propanoate.

Belongs to the metallo-dependent hydrolases superfamily. HutI family. The cofactor is Zn(2+). Requires Fe(3+) as cofactor.

The protein resides in the cytoplasm. The catalysed reaction is 4-imidazolone-5-propanoate + H2O = N-formimidoyl-L-glutamate. Its pathway is amino-acid degradation; L-histidine degradation into L-glutamate; N-formimidoyl-L-glutamate from L-histidine: step 3/3. Its function is as follows. Catalyzes the hydrolytic cleavage of the carbon-nitrogen bond in imidazolone-5-propanoate to yield N-formimidoyl-L-glutamate. It is the third step in the universal histidine degradation pathway. This Salmonella heidelberg (strain SL476) protein is Imidazolonepropionase.